The primary structure comprises 197 residues: Ribonuclease HII (197 aa).

The 189-residue stretch at 9–197 (ELIAGVDEVG…APVKKALEQF (189 aa)) folds into the RNase H type-2 domain. 3 residues coordinate a divalent metal cation: Asp-15, Glu-16, and Asp-107.

This sequence belongs to the RNase HII family. Requires Mn(2+) as cofactor. It depends on Mg(2+) as a cofactor.

The protein localises to the cytoplasm. The enzyme catalyses Endonucleolytic cleavage to 5'-phosphomonoester.. Functionally, endonuclease that specifically degrades the RNA of RNA-DNA hybrids. This Haemophilus influenzae (strain PittGG) protein is Ribonuclease HII.